We begin with the raw amino-acid sequence, 822 residues long: Aminopeptidase O (822 aa).

His-480 provides a ligand contact to Zn(2+). Catalysis depends on Glu-481, which acts as the Proton acceptor. Residues His-484 and Glu-503 each contribute to the Zn(2+) site. Residues 692 to 702 (RRPGKRQRRKR) carry the Nucleolar localization signal motif.

This sequence belongs to the peptidase M1 family. Zn(2+) is required as a cofactor.

The protein resides in the nucleus. It is found in the nucleolus. Aminopeptidase which catalyzes the hydrolysis of amino acid residues from the N-terminus of peptide or protein substrates. The chain is Aminopeptidase O (Aopep) from Rattus norvegicus (Rat).